We begin with the raw amino-acid sequence, 150 residues long: Lipoprotein signal peptidase (150 aa).

Helical transmembrane passes span 5-25 (LSLV…NWVV), 59-79 (QQWF…WFLW), and 83-103 (GQNW…GNFI). Catalysis depends on residues aspartate 113 and aspartate 129. A helical transmembrane segment spans residues 124-144 (IFNIADILLSVGFVVLFIAIL).

Belongs to the peptidase A8 family.

Its subcellular location is the cell membrane. The catalysed reaction is Release of signal peptides from bacterial membrane prolipoproteins. Hydrolyzes -Xaa-Yaa-Zaa-|-(S,diacylglyceryl)Cys-, in which Xaa is hydrophobic (preferably Leu), and Yaa (Ala or Ser) and Zaa (Gly or Ala) have small, neutral side chains.. It participates in protein modification; lipoprotein biosynthesis (signal peptide cleavage). This protein specifically catalyzes the removal of signal peptides from prolipoproteins. The chain is Lipoprotein signal peptidase from Lactococcus lactis subsp. cremoris (strain MG1363).